The primary structure comprises 287 residues: 4-hydroxybenzoate octaprenyltransferase (287 aa).

The next 5 membrane-spanning stretches (helical) occupy residues 20 to 38, 95 to 115, 211 to 231, 235 to 255, and 266 to 286; these read IGTLLLMWPCLMALWFAAG, IVFLVMALFAFCLVLLLNPLV, IIAAFQFAALACFIIAGLIAE, IYGGGILAFIGFALYQQKLIF, and FLNNNWAGMALFIALGLDYLV.

Belongs to the UbiA prenyltransferase family. Requires Mg(2+) as cofactor.

The protein localises to the cell inner membrane. It carries out the reaction all-trans-octaprenyl diphosphate + 4-hydroxybenzoate = 4-hydroxy-3-(all-trans-octaprenyl)benzoate + diphosphate. The protein operates within cofactor biosynthesis; ubiquinone biosynthesis. Its function is as follows. Catalyzes the prenylation of para-hydroxybenzoate (PHB) with an all-trans polyprenyl group. Mediates the second step in the final reaction sequence of ubiquinone-8 (UQ-8) biosynthesis, which is the condensation of the polyisoprenoid side chain with PHB, generating the first membrane-bound Q intermediate 3-octaprenyl-4-hydroxybenzoate. The sequence is that of 4-hydroxybenzoate octaprenyltransferase from Shewanella piezotolerans (strain WP3 / JCM 13877).